A 780-amino-acid chain; its full sequence is MTHEEHHAARTLGVGKAIAVLTSGGDAQGMNAAVRAVVRVGIFTGARVFFVHEGYQGLVDGGDHIREATWESVSMMLQLGGTVIGSARCKDFREREGRLRAAHNLVKRGITNLCVIGGDGSLTGADTFRSEWSDLLSDLQKAGKITAEEATRSSYLNIVGLVGSIDNDFCGTDMTIGTDSALHRITEIVDAITTTAQSHQRTFVLEVMGRHCGYLALVTSLSCGADWVFIPECPPDDNWEDHLCRRLSETRTRGSRLNIIIVAEGAIDRNGKPITSEGVKDLVVRRLGYDTRVTVLGHVQRGGTPSAFDRILGSRMGVEAVMALLEGTPDTPACVVSLSGNQAVRLPLMECVQVTKDVTKAMDEKRFDEAMKLRGRSFMNNWEVYKLLAHIRPPAPKSGSYTVAVMNVGAPAAGMNAAVRSTVRIGLIQGNRVLVVHDGFEGPAKGQIEEAGWSYVGGWTGQGGSKLGSKRTLPKKSFEQISANITKFNIQGLVIIGGFEAYTGGLELMEGRKQFDELCIPFVVIPATVSNNVPGSDFSVGADTALNTICTTCDRIKQSAAGTKRRVFIIETMGGYCGYLATMAGLAAGADAAYIFEEPFTIRDLQANVEHLVQKMKTTVKRGLVLRNEKCNENYTTDFIFNLYSEEGKGIFDSRKNVLGHMQQGGSPTPFDRNFATKMGAKAMNWMAGKIKESYRNGRIFANTPDSGCVLGMRKRALVFQPVTELQNQTDFEHRIPKEQWWLKLRPILKILAKYEIDLDTSEHAHLEHISRKRSGEATV.

T2 is subject to N-acetylthreonine. The segment at 2–390 (THEEHHAART…NWEVYKLLAH (389 aa)) is N-terminal catalytic PFK domain 1. Residues G25, 88 to 89 (RC), and 118 to 121 (GDGS) contribute to the ATP site. D119 lines the Mg(2+) pocket. The residue at position 133 (S133) is a Phosphoserine. Residues 164–166 (SID), R201, 208–210 (MGR), E264, R292, and 298–301 (HVQR) each bind substrate. D166 serves as the catalytic Proton acceptor. The residue at position 377 (S377) is a Phosphoserine. The interdomain linker stretch occupies residues 391–401 (IRPPAPKSGSY). Positions 402–780 (TVAVMNVGAP…SRKRSGEATV (379 aa)) are C-terminal regulatory PFK domain 2. Residues R471 and 528 to 532 (TVSNN) each bind beta-D-fructose 2,6-bisphosphate. An O-linked (GlcNAc) serine glycan is attached at S530. An N6-(2-hydroxyisobutyryl)lysine modification is found at K557. Residues R566, 573-575 (MGG), E629, R655, and 661-664 (HMQQ) each bind beta-D-fructose 2,6-bisphosphate. S667 is subject to Phosphoserine. R735 provides a ligand contact to beta-D-fructose 2,6-bisphosphate. The residue at position 775 (S775) is a Phosphoserine; by PKA.

Belongs to the phosphofructokinase type A (PFKA) family. ATP-dependent PFK group I subfamily. Eukaryotic two domain clade 'E' sub-subfamily. Homo- and heterotetramers. Phosphofructokinase (PFK) enzyme functions as a tetramer composed of different combinations of 3 types of subunits, called PFKM (M), PFKL (L) and PFKP (P). The composition of the PFK tetramer differs according to the tissue type it is present in. The kinetic and regulatory properties of the tetrameric enzyme are dependent on the subunit composition, hence can vary across tissues. Interacts (via C-terminus) with HK1 (via N-terminal spermatogenic cell-specific region). Requires Mg(2+) as cofactor. GlcNAcylation decreases enzyme activity.

The protein resides in the cytoplasm. It carries out the reaction beta-D-fructose 6-phosphate + ATP = beta-D-fructose 1,6-bisphosphate + ADP + H(+). It functions in the pathway carbohydrate degradation; glycolysis; D-glyceraldehyde 3-phosphate and glycerone phosphate from D-glucose: step 3/4. Allosterically activated by ADP, AMP, or fructose 2,6-bisphosphate, and allosterically inhibited by ATP or citrate. In terms of biological role, catalyzes the phosphorylation of D-fructose 6-phosphate to fructose 1,6-bisphosphate by ATP, the first committing step of glycolysis. The protein is ATP-dependent 6-phosphofructokinase, muscle type (PFKM) of Oryctolagus cuniculus (Rabbit).